Reading from the N-terminus, the 346-residue chain is Lipase chaperone (346 aa).

A helical transmembrane segment spans residues 10–30 (TIVFGVITSVLLLLLLIYYVF).

This sequence belongs to the lipase chaperone family.

It is found in the cell inner membrane. Functionally, may be involved in the folding of the extracellular lipase during its passage through the periplasm. This chain is Lipase chaperone (lifO), found in Acinetobacter venetianus (strain ATCC 31012 / DSM 23050 / BCRC 14357 / CCUG 45561 / CIP 110063 / KCTC 2702 / LMG 19082 / RAG-1).